Consider the following 191-residue polypeptide: Putative 3-methyladenine DNA glycosylase (191 aa).

Belongs to the DNA glycosylase MPG family.

This is Putative 3-methyladenine DNA glycosylase from Carboxydothermus hydrogenoformans (strain ATCC BAA-161 / DSM 6008 / Z-2901).